The chain runs to 254 residues: 3-oxo-5-alpha-steroid 4-dehydrogenase 2 (254 aa).

4 consecutive transmembrane segments (helical) span residues 8–28 (VPVLAGSATLATMGTLILCLG), 72–92 (PRSLFGPPGNVLLALFSAHYF), 146–166 (FSFGVFLFILGMGINIHSDYT), and 206–226 (LATWSVPAFAFAFFTLCFLGM).

It belongs to the steroid 5-alpha reductase family. Expressed in high levels in the prostate and many other androgen-sensitive tissues.

The protein resides in the microsome membrane. It localises to the endoplasmic reticulum membrane. It carries out the reaction a 3-oxo-5alpha-steroid + NADP(+) = a 3-oxo-Delta(4)-steroid + NADPH + H(+). It catalyses the reaction 17beta-hydroxy-5alpha-androstan-3-one + NADP(+) = testosterone + NADPH + H(+). The catalysed reaction is 5alpha-pregnane-3,20-dione + NADP(+) = progesterone + NADPH + H(+). Functionally, converts testosterone (T) into 5-alpha-dihydrotestosterone (DHT) and progesterone or corticosterone into their corresponding 5-alpha-3-oxosteroids. It plays a central role in sexual differentiation and androgen physiology. This chain is 3-oxo-5-alpha-steroid 4-dehydrogenase 2 (Srd5a2), found in Rattus norvegicus (Rat).